The sequence spans 430 residues: Isocitrate dehydrogenase [NADP], mitochondrial (430 aa).

The N-terminal 27 residues, 1–27 (MIRASAIQRTAMLLRQLRGFSTSATLA), are a transit peptide targeting the mitochondrion. Residues 101–103 (TIT) and R108 contribute to the NADP(+) site. T103 lines the substrate pocket. Substrate contacts are provided by residues 120-126 (SPNGTIR), R135, and R158. A Mn(2+)-binding site is contributed by D277. Residue K285 coordinates NADP(+). Position 300 (D300) interacts with Mn(2+). NADP(+) contacts are provided by residues 335-340 (GTVTRH) and N353.

The protein belongs to the isocitrate and isopropylmalate dehydrogenases family. Homodimer. Mg(2+) serves as cofactor. Mn(2+) is required as a cofactor.

It is found in the mitochondrion. The catalysed reaction is D-threo-isocitrate + NADP(+) = 2-oxoglutarate + CO2 + NADPH. Mitochondrial IDP1 may regulate flux through the tricarboxylic acid cycle and respiration. Its probably critical function is the production of NADPH. This Candida tropicalis (Yeast) protein is Isocitrate dehydrogenase [NADP], mitochondrial (IDP1).